Reading from the N-terminus, the 340-residue chain is Probable peroxidase 61 (340 aa).

An N-terminal signal peptide occupies residues Met-1–Ala-25. 4 disulfide bridges follow: Cys-46–Cys-122, Cys-79–Cys-84, Cys-128–Cys-331, and Cys-205–Cys-237. N-linked (GlcNAc...) asparagine glycosylation occurs at Asn-63. Arg-73 is a catalytic residue. 5 residues coordinate Ca(2+): Asp-78, Val-81, Gly-83, Asp-85, and Ser-87. Pro-168 contributes to the substrate binding site. His-198 serves as a coordination point for heme b. Residue Ser-199 coordinates Ca(2+). Asn-226 carries N-linked (GlcNAc...) asparagine glycosylation. 2 residues coordinate Ca(2+): Asp-255 and Ser-258.

It belongs to the peroxidase family. Classical plant (class III) peroxidase subfamily. Requires heme b as cofactor. It depends on Ca(2+) as a cofactor.

Its subcellular location is the secreted. It carries out the reaction 2 a phenolic donor + H2O2 = 2 a phenolic radical donor + 2 H2O. Removal of H(2)O(2), oxidation of toxic reductants, biosynthesis and degradation of lignin, suberization, auxin catabolism, response to environmental stresses such as wounding, pathogen attack and oxidative stress. The enzyme activity has to be proved. The sequence is that of Probable peroxidase 61 (PER61) from Arabidopsis thaliana (Mouse-ear cress).